The primary structure comprises 174 residues: uncharacterized protein (174 aa).

Belongs to the IIV-6 196R family.

This is an uncharacterized protein from Acheta domesticus (House cricket).